The sequence spans 393 residues: Methylthioribose kinase (393 aa).

ATP-binding positions include Asn-38, Lys-53, and 107–109 (EDL). Position 225 (Asp-225) interacts with substrate. ATP is bound at residue 242-244 (DPE). Arg-332 is a binding site for substrate.

Belongs to the methylthioribose kinase family. As to quaternary structure, homodimer.

It catalyses the reaction 5-(methylsulfanyl)-D-ribose + ATP = 5-(methylsulfanyl)-alpha-D-ribose 1-phosphate + ADP + H(+). It participates in amino-acid biosynthesis; L-methionine biosynthesis via salvage pathway; S-methyl-5-thio-alpha-D-ribose 1-phosphate from S-methyl-5'-thioadenosine (hydrolase route): step 2/2. Its function is as follows. Catalyzes the phosphorylation of methylthioribose into methylthioribose-1-phosphate. In Bacillus anthracis (strain A0248), this protein is Methylthioribose kinase.